A 719-amino-acid chain; its full sequence is Leucine-rich repeat and fibronectin type-III domain-containing protein 5 (719 aa).

An N-terminal signal peptide occupies residues Met1–Ala17. An LRRNT domain is found at Gln18–Arg51. Over Gln18 to Met529 the chain is Extracellular. LRR repeat units follow at residues Arg52 to Asn73, Ser76 to Asp97, Asn100 to Gly121, Asn124 to Asp145, Ala148 to Lys169, Ser172 to His193, and Lys196 to Gln217. Residue Asn73 is glycosylated (N-linked (GlcNAc...) asparagine). Residues Asn240–Pro286 enclose the LRRCT domain. The Ig-like domain maps to Pro287 to His373. The cysteines at positions 308 and 357 are disulfide-linked. 5 N-linked (GlcNAc...) asparagine glycosylation sites follow: Asn330, Asn339, Asn382, Asn406, and Asn452. Residues Asn385–Met416 are disordered. Positions Gly393–Gly412 are enriched in low complexity. A Fibronectin type-III domain is found at Thr414–Val503. Residues Ile530–Ile550 form a helical membrane-spanning segment. Over Arg551–Ile719 the chain is Cytoplasmic. Residues Ser614 to Ser627 are compositionally biased toward low complexity. Residues Ser614 to Ile719 form a disordered region. 3 stretches are compositionally biased toward polar residues: residues Ala628–Gln641, Glu654–Gln677, and Leu702–Thr713.

It belongs to the LRFN family. Can form heteromeric complexes with LRFN1, LRFN2, LRFN3 and LFRN4. Able to form homomeric complexes across cell junctions, between adjacent cells. Does not interact with DLG1, DLG2 or DLG3. Does not interact with DLG4. In terms of processing, glycosylated. Predominantly expressed in the brain, with a weak, but broad expression in the cerebral cortex and diencephalic nuclei. Strongly expressed in both the pyramidal layer and the dentate gyrus of the hippocampus. Also detected in other parts of the central nervous system, including the olfactory bulb, pons, cerebellum, and medulla oblongata, as well as in the peripheral nervous system, such as the ganglia of cranial nerves and the dorsal root ganglion during gestation.

It localises to the membrane. In terms of biological role, cell adhesion molecule that mediates homophilic cell-cell adhesion in a Ca(2+)-independent manner. Promotes neurite outgrowth in hippocampal neurons. In Mus musculus (Mouse), this protein is Leucine-rich repeat and fibronectin type-III domain-containing protein 5 (Lrfn5).